Reading from the N-terminus, the 78-residue chain is Large ribosomal subunit protein bL31 (78 aa).

Zn(2+) contacts are provided by C16, C18, C38, and C41.

It belongs to the bacterial ribosomal protein bL31 family. Type A subfamily. In terms of assembly, part of the 50S ribosomal subunit. It depends on Zn(2+) as a cofactor.

In terms of biological role, binds the 23S rRNA. The polypeptide is Large ribosomal subunit protein bL31 (Parafrankia sp. (strain EAN1pec)).